The sequence spans 402 residues: E3 ubiquitin-protein ligase makorin-2 (402 aa).

C3H1-type zinc fingers lie at residues 2 to 29 (TTKQ…HDPS), 31 to 58 (SKPS…HVKL), and 141 to 168 (QDLP…HGDK). A makorin-type Cys-His region spans residues 169 to 198 (CEVCGLQVLDPHNPEQRSMHEKMCLLAFEA). An RING-type zinc finger spans residues 214-268 (CSICMEVVVQKMNPSDRRFGILSSCCHVFCLACIRKWRCTRNFSNKIIKSCPECR). The C3H1-type 4 zinc finger occupies 297 to 326 (GVGKKPCKYFDQGRGSCPFGGKCLYLHALP).

The protein localises to the cytoplasm. It is found in the nucleus. It catalyses the reaction S-ubiquitinyl-[E2 ubiquitin-conjugating enzyme]-L-cysteine + [acceptor protein]-L-lysine = [E2 ubiquitin-conjugating enzyme]-L-cysteine + N(6)-ubiquitinyl-[acceptor protein]-L-lysine.. The protein operates within protein modification; protein ubiquitination. E3 ubiquitin ligase catalyzing the covalent attachment of ubiquitin moieties onto substrate proteins. Inhibits neurogenesis and axis formation during embryonic development by modulating the phosphatidylinositol 3-kinase (PI3K) pathway. Acts downstream of PI3K and akt1 to up-regulate gsk3b mRNA expression. The chain is E3 ubiquitin-protein ligase makorin-2 from Takifugu rubripes (Japanese pufferfish).